The primary structure comprises 421 residues: 5-methylthioadenosine/S-adenosylhomocysteine deaminase (421 aa).

Zn(2+) is bound by residues H60 and H62. The substrate site is built by E89 and H181. H208 lines the Zn(2+) pocket. Substrate-binding residues include E211 and D296. Residue D296 participates in Zn(2+) binding.

The protein belongs to the metallo-dependent hydrolases superfamily. MTA/SAH deaminase family. Zn(2+) is required as a cofactor.

The enzyme catalyses S-adenosyl-L-homocysteine + H2O + H(+) = S-inosyl-L-homocysteine + NH4(+). It carries out the reaction S-methyl-5'-thioadenosine + H2O + H(+) = S-methyl-5'-thioinosine + NH4(+). Functionally, catalyzes the deamination of 5-methylthioadenosine and S-adenosyl-L-homocysteine into 5-methylthioinosine and S-inosyl-L-homocysteine, respectively. Is also able to deaminate adenosine. This is 5-methylthioadenosine/S-adenosylhomocysteine deaminase from Pyrococcus horikoshii (strain ATCC 700860 / DSM 12428 / JCM 9974 / NBRC 100139 / OT-3).